The primary structure comprises 201 residues: Holliday junction branch migration complex subunit RuvA (201 aa).

The segment at Met1–Gln63 is domain I. Residues Ser64–Lys142 form a domain II region. The tract at residues Ala143 to Ser153 is flexible linker. The segment at Ser153–Lys201 is domain III.

It belongs to the RuvA family. In terms of assembly, homotetramer. Forms an RuvA(8)-RuvB(12)-Holliday junction (HJ) complex. HJ DNA is sandwiched between 2 RuvA tetramers; dsDNA enters through RuvA and exits via RuvB. An RuvB hexamer assembles on each DNA strand where it exits the tetramer. Each RuvB hexamer is contacted by two RuvA subunits (via domain III) on 2 adjacent RuvB subunits; this complex drives branch migration. In the full resolvosome a probable DNA-RuvA(4)-RuvB(12)-RuvC(2) complex forms which resolves the HJ.

The protein localises to the cytoplasm. In terms of biological role, the RuvA-RuvB-RuvC complex processes Holliday junction (HJ) DNA during genetic recombination and DNA repair, while the RuvA-RuvB complex plays an important role in the rescue of blocked DNA replication forks via replication fork reversal (RFR). RuvA specifically binds to HJ cruciform DNA, conferring on it an open structure. The RuvB hexamer acts as an ATP-dependent pump, pulling dsDNA into and through the RuvAB complex. HJ branch migration allows RuvC to scan DNA until it finds its consensus sequence, where it cleaves and resolves the cruciform DNA. This Listeria innocua serovar 6a (strain ATCC BAA-680 / CLIP 11262) protein is Holliday junction branch migration complex subunit RuvA.